The primary structure comprises 452 residues: Coproporphyrinogen III oxidase (452 aa).

FAD is bound by residues 10–15, 36–37, 58–61, valine 242, tryptophan 390, and 426–428; these read GGGISG, EP, GAEA, and IGV.

The protein belongs to the protoporphyrinogen/coproporphyrinogen oxidase family. Coproporphyrinogen III oxidase subfamily. Requires FAD as cofactor.

The protein resides in the cytoplasm. The catalysed reaction is coproporphyrinogen III + 3 O2 = coproporphyrin III + 3 H2O2. Its pathway is porphyrin-containing compound metabolism; protoheme biosynthesis. Involved in coproporphyrin-dependent heme b biosynthesis. Catalyzes the oxidation of coproporphyrinogen III to coproporphyrin III. The protein is Coproporphyrinogen III oxidase of Mycobacterium bovis (strain ATCC BAA-935 / AF2122/97).